Consider the following 149-residue polypeptide: Putative pre-16S rRNA nuclease (149 aa).

This sequence belongs to the YqgF nuclease family.

The protein resides in the cytoplasm. Its function is as follows. Could be a nuclease involved in processing of the 5'-end of pre-16S rRNA. The protein is Putative pre-16S rRNA nuclease of Pseudoalteromonas translucida (strain TAC 125).